Here is a 375-residue protein sequence, read N- to C-terminus: Probable 1-acyl-sn-glycerol-3-phosphate acyltransferase 5 (375 aa).

The next 2 membrane-spanning stretches (helical) occupy residues 21–41 (IICL…WGFL) and 57–77 (CVSF…EKIN). Positions 100–105 (HRTEVD) match the HXXXXD motif motif. 2 helical membrane passes run 312 to 332 (YLIN…LTFF) and 337 to 357 (WFRI…HFNL).

The protein belongs to the 1-acyl-sn-glycerol-3-phosphate acyltransferase family. Widely expressed at low level.

It is found in the membrane. It catalyses the reaction a 1-acyl-sn-glycero-3-phosphate + an acyl-CoA = a 1,2-diacyl-sn-glycero-3-phosphate + CoA. The protein operates within phospholipid metabolism; CDP-diacylglycerol biosynthesis; CDP-diacylglycerol from sn-glycerol 3-phosphate: step 2/3. Its function is as follows. May convert lysophosphatidic acid (LPA) into phosphatidic acid by incorporating acyl moiety at the 2 position. Has no activity when expressed in bacteria or yeast. This is Probable 1-acyl-sn-glycerol-3-phosphate acyltransferase 5 (LPAT5) from Arabidopsis thaliana (Mouse-ear cress).